Here is a 501-residue protein sequence, read N- to C-terminus: MAQVINTNSLSLLTQNNLNKSQSALGTAIERLSSGLRINSAKDDAAGQAIANRFTANIKGLTQASRNANDGISIAHTTEGALNEINNNLQRVRELAVQSANSTNSQSDLDSIQAEITQRLNEIDRVSGQTQFNGVKVLAQDNTLTIQVGANDGETIDIDLKQINSQTLGLDSLNVQKAYDVSATDVISSTYSDGTQALTAPTATDIKAALGNPTVTGDTLTAAVSFKDGKYYATVSGYTDAGDTAKNGKYEVTVDSATGAVSFGATPTKSTVTGDTAVTKVQVNAPVAADAATKKALQDGGVSSADASAATLVKMSYTDKNGKTIEGGYALKAGDKYYAADYDEATGAIKAKTTSYTAADGTTKTAANQLGGVDGKTEVVTIDGKTYNASKAAGHDFKAQPELAEAAAKTTENPLQKIDAALAQVDALRSDLGAVQNRFNSAITNLGNTVNNLSEARSRIEDSDYATEVSNMSRAQILQQAGTSVLAQANQVPQNVLSLLR.

This sequence belongs to the bacterial flagellin family.

The protein localises to the secreted. The protein resides in the bacterial flagellum. In terms of biological role, flagellin is the subunit protein which polymerizes to form the filaments of bacterial flagella. The protein is Phase 2 flagellin (fljB) of Salmonella abortus-equi.